A 464-amino-acid polypeptide reads, in one-letter code: MSTDKTNQSWGGRFSEPVDAFVARFTASVDFDKRLYRHDIMGSIAHATMLAQVGVLSDAERDTIIDGLKTIQGEIEAGNFDWRVDLEDVHMNIEARLTDRIGITGKKLHTGRSRNDQVATDIRLWLRDEIDLILAEITRLQQGLLEQAEREAETIMPGFTHLQTAQPVTFGHHLLAWFEMLSRDYERLVDCRKRANRMPLGSAALAGTTYPIDRELTCKLLGFEAVAGNSLDGVSDRDFAIEFCAAASVAMMHLSRFSEELVLWTSAQFQFIDLPDRFCTGSSIMPQKKNPDVPELVRGKTGRVFGALTGLLTLMKGQPLAYNKDNQEDKEPLFDAADTLRDSLRAFADMIPAIKPKHAIMREAALRGFSTATDLADYLVRRGLPFRDCHEIVGHAVKYGVDTGKDLAEMSLDELRQFSDQIEQDVFAVLTLEGSVNARNHIGGTAPAQVRAAVVRGKALLASR.

Belongs to the lyase 1 family. Argininosuccinate lyase subfamily.

It is found in the cytoplasm. It carries out the reaction 2-(N(omega)-L-arginino)succinate = fumarate + L-arginine. It participates in amino-acid biosynthesis; L-arginine biosynthesis; L-arginine from L-ornithine and carbamoyl phosphate: step 3/3. The protein is Argininosuccinate lyase of Pseudomonas putida (strain GB-1).